Here is a 372-residue protein sequence, read N- to C-terminus: L-selectin (372 aa).

Residues 1 to 28 (MIFPRKCQSTQRDLWNIFKLWGWTMLCC) form the signal peptide. Residues 29–38 (DFLAHHGTDC) constitute a propeptide that is removed on maturation. Residues 39–332 (WTYHYSENPM…FSMIKEGDYN (294 aa)) lie on the Extracellular side of the membrane. Positions 55–155 (RFCRENYTDL…ACHKPKAALC (101 aa)) constitute a C-type lectin domain. Disulfide bonds link Cys57–Cys155, Cys128–Cys147, Cys128–Cys160, Cys160–Cys171, Cys165–Cys180, Cys182–Cys191, Cys197–Cys241, Cys227–Cys254, Cys259–Cys303, and Cys289–Cys316. 2 N-linked (GlcNAc...) asparagine glycosylation sites follow: Asn60 and Asn104. The Ca(2+) site is built by Glu118, Asn120, Glu126, Asn143, and Asp144. An EGF-like domain is found at 156-192 (YTASCQPWSCSGHGECVEIINNYTCNCDVGYYGPQCQ). Asn177 is a glycosylation site (N-linked (GlcNAc...) asparagine). Sushi domains are found at residues 195 to 256 (IQCE…TCQV) and 257 to 318 (IQCE…ICQK). N-linked (GlcNAc...) asparagine glycans are attached at residues Asn226, Asn232, Asn246, and Asn271. The chain crosses the membrane as a helical span at residues 333 to 355 (PLFIPVAVIVTAFSGLAFIIWLA). Residues 356–372 (RRLKKGKKSKKSMDDPY) lie on the Cytoplasmic side of the membrane.

The protein belongs to the selectin/LECAM family. As to quaternary structure, interaction with SELPLG/PSGL1 and PODXL2 is required for promoting recruitment and rolling of leukocytes. This interaction is dependent on the sialyl Lewis X glycan modification of SELPLG and PODXL2, and tyrosine sulfation modifications of SELPLG. Sulfation on 'Tyr-51' of SELPLG is important for L-selectin binding. In terms of processing, N-glycosylated.

It localises to the cell membrane. Calcium-dependent lectin that mediates cell adhesion by binding to glycoproteins on neighboring cells. Mediates the adherence of lymphocytes to endothelial cells of high endothelial venules in peripheral lymph nodes. Promotes initial tethering and rolling of leukocytes in endothelia. The sequence is that of L-selectin (SELL) from Papio hamadryas (Hamadryas baboon).